The primary structure comprises 164 residues: Putative HTH-type transcriptional regulator ORF2 (164 aa).

One can recognise an HTH rrf2-type domain in the interval 2–131 (RLTTKGRYAV…SGISLADLVA (130 aa)).

In Azotobacter vinelandii, this protein is Putative HTH-type transcriptional regulator ORF2.